The sequence spans 320 residues: Malate dehydrogenase (320 aa).

NAD(+) contacts are provided by residues 10–15 (GSGMIG) and Asp34. Substrate-binding residues include Arg83 and Arg89. NAD(+)-binding positions include Asn96 and 119–121 (ITN). Positions 121 and 152 each coordinate substrate. Catalysis depends on His176, which acts as the Proton acceptor.

This sequence belongs to the LDH/MDH superfamily. MDH type 3 family.

The catalysed reaction is (S)-malate + NAD(+) = oxaloacetate + NADH + H(+). In terms of biological role, catalyzes the reversible oxidation of malate to oxaloacetate. This Bartonella quintana (strain Toulouse) (Rochalimaea quintana) protein is Malate dehydrogenase.